The following is a 418-amino-acid chain: Tyrosine--tRNA ligase (418 aa).

Tyr34 serves as a coordination point for L-tyrosine. The short motif at 39 to 48 (PTADSLHLGH) is the 'HIGH' region element. Residues Tyr169 and Gln173 each contribute to the L-tyrosine site. The short motif at 229-233 (KFGKS) is the 'KMSKS' region element. Lys232 serves as a coordination point for ATP. An S4 RNA-binding domain is found at 352 to 418 (HNIVELLVTA…GKKKYFVLTY (67 aa)).

Belongs to the class-I aminoacyl-tRNA synthetase family. TyrS type 1 subfamily. As to quaternary structure, homodimer.

It is found in the cytoplasm. The enzyme catalyses tRNA(Tyr) + L-tyrosine + ATP = L-tyrosyl-tRNA(Tyr) + AMP + diphosphate + H(+). In terms of biological role, catalyzes the attachment of tyrosine to tRNA(Tyr) in a two-step reaction: tyrosine is first activated by ATP to form Tyr-AMP and then transferred to the acceptor end of tRNA(Tyr). This is Tyrosine--tRNA ligase from Streptococcus mutans serotype c (strain ATCC 700610 / UA159).